The sequence spans 219 residues: Ropporin-1-like protein (219 aa).

The RIIa domain occupies 17–54 (PELPDILKQFTKAAIRTQPHDLLQWSAAYFDSLSKGEP).

The protein belongs to the ropporin family. As to quaternary structure, component of axonemal radial spoke complexes.

The protein localises to the cell projection. It localises to the cilium. It is found in the flagellum. In terms of biological role, functions as part of axonemal radial spoke complexes that play an important part in the motility of sperm and cilia. Important for male fertility. Involved in fibrous sheath integrity and sperm motility, plays a role in PKA-dependent signaling processes required for spermatozoa capacitation. This Xenopus laevis (African clawed frog) protein is Ropporin-1-like protein (ropn1l).